The primary structure comprises 713 residues: F-box/WD repeat-containing protein 7 (713 aa).

A disordered region spans residues 1–150; sequence MNQELLSVGS…DEHTHNSNVT (150 aa). At Ser26 the chain carries Phosphoserine. Basic and acidic residues predominate over residues 46–55; sequence RHQEEEHTAR. Residues 69–84 show a composition bias toward polar residues; sequence QNDSQQGQVEENNNRF. Over residues 87–135 the composition is skewed to acidic residues; it reads VDEDSSGNQEEQEEDEEHAGEQEEEEEEEEEEEEEEEMDQESDDFDQSD. Residues 94 to 136 adopt a coiled-coil conformation; that stretch reads NQEEQEEDEEHAGEQEEEEEEEEEEEEEEEMDQESDDFDQSDD. Residues 136–145 show a composition bias toward basic and acidic residues; it reads DSSREDEHTH. Thr211 carries the post-translational modification Phosphothreonine. Residue Ser233 is modified to Phosphoserine. The F-box domain occupies 284–330; it reads RDFISLLPKELALYVLSFLEPKDLLQAAQTCRYWRILAEDNLLWREK. 7 WD repeats span residues 384-424, 426-462, 465-504, 506-542, 545-584, 586-624, and 628-665; these read GHDD…RTLV, HTGGVWSSQMRDNIIISGSTDRTLKVWNAETGECIHT, GHTSTVRCMHLHEKRVVSGSRDATLRVWDIETGQCLHVLM, HVAAVRCVQYDGRRVVSGAYDFMVKVWDPETETCLHT, GHTNRVYSLQFDGIHVVSGSLDTSIRVWDVETGNCIHTLT, HQSLTSGMELKDNILVSGNADSTVKIWDIKTGQCLQTLQ, and KHQSAVTCLQFNKNFVITSSDDGTVKLWDLKTGEFIRN.

As to quaternary structure, homodimer; homodimerization plays a role in substrate binding and/or ubiquitination and degradation. Component of the SCF(FBXW7) complex consisting of CUL1, RBX1, SKP1 and FBXW7. Interacts (via F-box domain) with SKP1. Interacts (via F-box domain) with pseudophosphatase STYX; the interaction is direct and prevents FBXW7 interaction with SKP1. Interacts with cyclin-E (CCNE1 or CCNE2). Interacts with PSEN1. Forms a trimeric complex with NOTCH1 and SGK1. Interacts with NOTCH1 intracellular domain/NICD and NOTCH4 intracellular domain/NICD. Interacts with NOTCH2 intracellular domain (N2ICD). Interacts with MYC (when phosphorylated). Interacts with USP28, counteracting ubiquitination of MYC. Interacts (when phosphorylated at Thr-211) with PIN1, disrupting FBXW7 dimerization and promoting FBXW7 autoubiquitination and degradation. Interacts with UBE2QL1. Interacts with FAM83D; promotes FBXW7 degradation. Interacts with MYCN; FBXW7 competes with AURKA for binding to unphosphorylated MYCN but not for binding to phosphorylated MYCN. Interacts with JUN. Found in a complex with JUN and PRR7. Interacts with JUN and PRR7; the interaction inhibits ubiquitination-mediated JUN degradation, promoting its phosphorylation and transcriptional activity. Interacts with NFE2L1. Interacts with NR1D1. Interacts with RICTOR; mediates RICTOR ubiquitination and degradation. In terms of processing, phosphorylation at Thr-211 promotes interaction with PIN1, leading to disrupt FBXW7 dimerization and promoting FBXW7 autoubiquitination and degradation. Phosphorylated by ATM at Ser-26 in response to DNA damage, promoting recruitment to DNA damage sites and 'Lys-63'-linked ubiquitination of phosphorylated XRCC4. Ubiquitinated: autoubiquitinates following phosphorylation at Thr-211 and subsequent interaction with PIN1. Ubiquitination leads to its degradation.

The protein resides in the nucleus. It is found in the nucleoplasm. The protein localises to the chromosome. The protein operates within protein modification; protein ubiquitination. Substrate recognition component of a SCF (SKP1-CUL1-F-box protein) E3 ubiquitin-protein ligase complex which mediates the ubiquitination and subsequent proteasomal degradation of target proteins. Recognizes and binds phosphorylated sites/phosphodegrons within target proteins and thereafter brings them to the SCF complex for ubiquitination. Identified substrates include cyclin-E (CCNE1 or CCNE2), JUN, MYC, NOTCH1 released notch intracellular domain (NICD), NOTCH2, MCL1, MLST8, RICTOR and probably PSEN1. Acts as a negative regulator of JNK signaling by binding to phosphorylated JUN and promoting its ubiquitination and subsequent degradation. SCF(FBXW7) complex mediates the ubiquitination and subsequent degradation of NFE2L1. Involved in bone homeostasis and negative regulation of osteoclast differentiation. Regulates the amplitude of the cyclic expression of hepatic core clock genes and genes involved in lipid and glucose metabolism via ubiquitination and proteasomal degradation of their transcriptional repressor NR1D1; CDK1-dependent phosphorylation of NR1D1 is necessary for SCF(FBXW7)-mediated ubiquitination. Also able to promote 'Lys-63'-linked ubiquitination in response to DNA damage. The SCF(FBXW7) complex facilitates double-strand break repair following phosphorylation by ATM: phosphorylation promotes localization to sites of double-strand breaks and 'Lys-63'-linked ubiquitination of phosphorylated XRCC4, enhancing DNA non-homologous end joining. The polypeptide is F-box/WD repeat-containing protein 7 (Rattus norvegicus (Rat)).